We begin with the raw amino-acid sequence, 550 residues long: CTP synthase (550 aa).

The amidoligase domain stretch occupies residues 1–266 (MNVNYIFVTG…DEYICKYFNL (266 aa)). Ser14 is a binding site for CTP. Ser14 lines the UTP pocket. ATP is bound by residues 15 to 20 (SLGKGI) and Asp72. Residues Asp72 and Glu140 each contribute to the Mg(2+) site. CTP-binding positions include 147–149 (DIE), 187–192 (KTKPTQ), and Lys223. Residues 187 to 192 (KTKPTQ) and Lys223 contribute to the UTP site. One can recognise a Glutamine amidotransferase type-1 domain in the interval 291–546 (TIGIVGKYIR…INAAIQYQCK (256 aa)). Position 353 (Gly353) interacts with L-glutamine. Cys380 serves as the catalytic Nucleophile; for glutamine hydrolysis. L-glutamine contacts are provided by residues 381 to 384 (LGMQ), Glu404, and Arg474. Catalysis depends on residues His519 and Glu521.

The protein belongs to the CTP synthase family. In terms of assembly, homotetramer.

It catalyses the reaction UTP + L-glutamine + ATP + H2O = CTP + L-glutamate + ADP + phosphate + 2 H(+). It carries out the reaction L-glutamine + H2O = L-glutamate + NH4(+). The enzyme catalyses UTP + NH4(+) + ATP = CTP + ADP + phosphate + 2 H(+). Its pathway is pyrimidine metabolism; CTP biosynthesis via de novo pathway; CTP from UDP: step 2/2. Allosterically activated by GTP, when glutamine is the substrate; GTP has no effect on the reaction when ammonia is the substrate. The allosteric effector GTP functions by stabilizing the protein conformation that binds the tetrahedral intermediate(s) formed during glutamine hydrolysis. Inhibited by the product CTP, via allosteric rather than competitive inhibition. Its function is as follows. Catalyzes the ATP-dependent amination of UTP to CTP with either L-glutamine or ammonia as the source of nitrogen. Regulates intracellular CTP levels through interactions with the four ribonucleotide triphosphates. This chain is CTP synthase, found in Blochmanniella floridana.